The sequence spans 178 residues: PRA1 family protein 2 (178 aa).

Residues 1–41 (MSEVRLPPLRALDDFVLGSARLAAPDPGDPQRWCHRVINNL) lie on the Cytoplasmic side of the membrane. A helical transmembrane segment spans residues 42 to 62 (LYYQTNYLLCFGISLALAGYI). At 63–64 (RP) the chain is on the extracellular side. The chain crosses the membrane as a helical span at residues 65 to 85 (LHTLLSALVVVVALGVLVWAA). The Cytoplasmic segment spans residues 86 to 96 (ETRAAVRRCRR). The chain crosses the membrane as a helical span at residues 97–119 (SHPAACLAAVLAISLFILWAVGG). At 120–122 (AFT) the chain is on the extracellular side. A helical membrane pass occupies residues 123 to 140 (FLLSITAPVFLILLHASL). The Cytoplasmic portion of the chain corresponds to 141–178 (RLRNLKNKIENKIESIGLKRTPMGLLLEALGQEQEAGS).

This sequence belongs to the PRA1 family. Interacts with CCR5 and GDE1.

It localises to the endosome membrane. May be involved in ER/Golgi transport and vesicular traffic. Plays a proapoptotic role in cerulenin-induced neuroblastoma apoptosis. The protein is PRA1 family protein 2 (Praf2) of Mus musculus (Mouse).